Reading from the N-terminus, the 312-residue chain is Taste receptor type 2 member 140 (312 aa).

Over Met-1–Leu-9 the chain is Extracellular. Residues Leu-10–Val-30 traverse the membrane as a helical segment. Over Asn-31–Gln-46 the chain is Cytoplasmic. Residues Ile-47–Val-67 traverse the membrane as a helical segment. At Ile-68–Asn-87 the chain is on the extracellular side. The chain crosses the membrane as a helical span at residues Phe-88–Phe-108. Residues Leu-109 to Thr-133 are Cytoplasmic-facing. A helical transmembrane segment spans residues Leu-134 to Ile-154. At Ser-155–Met-185 the chain is on the extracellular side. Asn-162 carries an N-linked (GlcNAc...) asparagine glycan. A helical membrane pass occupies residues Phe-186–Trp-206. The Cytoplasmic portion of the chain corresponds to Arg-207–Lys-229. Residues Ala-230–Met-250 form a helical membrane-spanning segment. The Extracellular portion of the chain corresponds to Gln-251 to Asn-264. The helical transmembrane segment at Leu-265 to Gly-285 threads the bilayer. Residues Asn-286–Pro-312 lie on the Cytoplasmic side of the membrane.

The protein belongs to the G-protein coupled receptor T2R family.

Its subcellular location is the membrane. Functionally, putative taste receptor which may play a role in the perception of bitterness. In Rattus norvegicus (Rat), this protein is Taste receptor type 2 member 140.